The primary structure comprises 412 residues: MSGEIERSQEVAVIFAQDTDHKAQYEALAKLCNKYLPQNAMGRVDTAEIIKIIDTVIALETGSMVVSRQFVSLITERLDNQHLESECVKAISEGILAIIKTRTISYEDQVCILRLMLASLYEKEGRIKDAAQALIAINSDTSPKFNGPQAAKEGAKAQLCIRITKLLLDCSEIDEAEQYVNRTSILMVDLGANPDIQIEHKALQARVSDAKRRFVEAAQRYYELSATEQLPNSDKLTALGKAIVCVLLAKPGPQRSRLLTLIFKDERAPKCASFELIAKMYLTKVIHKDELEEFEHQLQDHQKADEHGESILKGVIQEHNITAISQLYINISFKTLGQLLGVDTEAAESMAGEMISSERLHGYIDQTNGILHFEDSNPMRVWDSQILSTLEQINKVSDMIVARHSEFAEFLT.

The PCI domain occupies 216 to 378; the sequence is EAAQRYYELS…GILHFEDSNP (163 aa).

Belongs to the CSN4 family. In terms of assembly, component of the CSN complex, probably composed of csn-1, csn-2, csn-3, csn-4, csn-5, csn-6 and csn-7. Within the complex it probably interacts directly with csn-2 and csn-4. In the complex, it probably interacts directly with csn-1, csn-2, csn-3 and csn-6. Interacts with itself.

The protein resides in the cytoplasm. It is found in the nucleus. Functionally, component of the COP9 signalosome complex (CSN), a complex involved in various cellular and developmental processes. The CSN complex is an essential regulator of the ubiquitin (Ubl) conjugation pathway by mediating the deneddylation of the cullin subunits of the SCF-type E3 ligase complexes, leading to decrease the Ubl ligase activity of SCF. The CSN complex plays an essential role in embryogenesis and oogenesis and is required to regulate microtubule stability in the early embryo. Mediates mei-3/katanin targeting for degradation at the meiosis to mitosis transition via deneddylation of cul-3. This is COP9 signalosome complex subunit 4 (csn-4) from Caenorhabditis elegans.